A 944-amino-acid polypeptide reads, in one-letter code: Protein phosphatase 1 regulatory subunit 37 homolog (944 aa).

The interval 42-71 (QQQSHSAATSVRKKTCQDANSSGEDPNGRI) is disordered. LRR repeat units lie at residues 203–224 (SCVRLNLSFNKQIDMRGWTTIF), 232–255 (SLQMLNLRYTNLNDRSIPALCKMA), 262–282 (SLTCLHLENTQMSGKNLLVLI), 290–311 (GLRELYLGDNGLQPTDGSHIYQ), and 318–338 (SLQLLDLRNNSIGDSGVRHIC). A disordered region spans residues 517 to 598 (EEGDSGVEKK…KERHQRFVRS (82 aa)). The span at 522–542 (GVEKKDGNECEGEDNKDRQDT) shows a compositional bias: basic and acidic residues. Composition is skewed to polar residues over residues 543–554 (PAETENGVSSNE) and 567–585 (PESNNNEKSPLMASSSTSK). Residues 586–595 (LSRKERHQRF) are compositionally biased toward basic residues.

This sequence belongs to the PPP1R37 family.

This is Protein phosphatase 1 regulatory subunit 37 homolog from Caenorhabditis elegans.